The chain runs to 323 residues: 1D-myo-inositol 2-acetamido-2-deoxy-alpha-D-glucopyranoside deacetylase (323 aa).

Zn(2+)-binding residues include histidine 28, aspartate 31, and histidine 163.

Belongs to the MshB deacetylase family. The cofactor is Zn(2+).

It catalyses the reaction 1D-myo-inositol 2-acetamido-2-deoxy-alpha-D-glucopyranoside + H2O = 1D-myo-inositol 2-amino-2-deoxy-alpha-D-glucopyranoside + acetate. Functionally, catalyzes the deacetylation of 1D-myo-inositol 2-acetamido-2-deoxy-alpha-D-glucopyranoside (GlcNAc-Ins) in the mycothiol biosynthesis pathway. This chain is 1D-myo-inositol 2-acetamido-2-deoxy-alpha-D-glucopyranoside deacetylase, found in Streptomyces scabiei (strain 87.22).